Consider the following 171-residue polypeptide: Shikimate kinase (171 aa).

14–19 is an ATP binding site; that stretch reads GAGKST. A Mg(2+)-binding site is contributed by S18. 3 residues coordinate substrate: D36, R60, and G82. Residue R120 coordinates ATP. Position 139 (R139) interacts with substrate. Position 156 (Q156) interacts with ATP.

This sequence belongs to the shikimate kinase family. In terms of assembly, monomer. It depends on Mg(2+) as a cofactor.

Its subcellular location is the cytoplasm. It catalyses the reaction shikimate + ATP = 3-phosphoshikimate + ADP + H(+). It participates in metabolic intermediate biosynthesis; chorismate biosynthesis; chorismate from D-erythrose 4-phosphate and phosphoenolpyruvate: step 5/7. Catalyzes the specific phosphorylation of the 3-hydroxyl group of shikimic acid using ATP as a cosubstrate. In Shewanella putrefaciens (strain CN-32 / ATCC BAA-453), this protein is Shikimate kinase.